We begin with the raw amino-acid sequence, 333 residues long: Chlorophyllide reductase 35.5 kDa chain (333 aa).

Over residues 1–17 the composition is skewed to basic and acidic residues; that stretch reads MTDAPELKAFDQRLRDE. The interval 1–30 is disordered; the sequence is MTDAPELKAFDQRLRDEAAEEPTLEVPQGE. Residues 45–50 and lysine 74 each bind ATP; that span reads GIGKSF. A Mg(2+)-binding site is contributed by serine 49. The [4Fe-4S] cluster site is built by cysteine 130 and cysteine 165. 219 to 220 is a binding site for ATP; sequence NK.

Belongs to the NifH/BchL/ChlL family. In terms of assembly, homodimer. Chlorophyllide reductase is composed of three subunits; BchX, BchY and BchZ. It depends on [4Fe-4S] cluster as a cofactor.

The catalysed reaction is 3-deacetyl-3-vinylbacteriochlorophyllide a + 2 oxidized [2Fe-2S]-[ferredoxin] + ADP + phosphate = chlorophyllide a + 2 reduced [2Fe-2S]-[ferredoxin] + ATP + H2O + H(+). It carries out the reaction bacteriochlorophyllide a + 2 oxidized [2Fe-2S]-[ferredoxin] + ADP + phosphate = 3-acetyl-3-devinylchlorophyllide a + 2 reduced [2Fe-2S]-[ferredoxin] + ATP + H2O + H(+). The enzyme catalyses 3-deacetyl-3-(1-hydroxyethyl)bacteriochlorophyllide a + 2 oxidized [2Fe-2S]-[ferredoxin] + ADP + phosphate = 3-devinyl-3-(1-hydroxyethyl)chlorophyllide a + 2 reduced [2Fe-2S]-[ferredoxin] + ATP + H2O + H(+). It functions in the pathway porphyrin-containing compound metabolism; bacteriochlorophyll biosynthesis. In terms of biological role, converts chlorophylls (Chl) into bacteriochlorophylls (BChl) by reducing ring B of the tetrapyrrole. The sequence is that of Chlorophyllide reductase 35.5 kDa chain (bchX) from Cereibacter sphaeroides (strain ATCC 17023 / DSM 158 / JCM 6121 / CCUG 31486 / LMG 2827 / NBRC 12203 / NCIMB 8253 / ATH 2.4.1.) (Rhodobacter sphaeroides).